A 132-amino-acid chain; its full sequence is Small ribosomal subunit protein uS8 (132 aa).

Belongs to the universal ribosomal protein uS8 family. Part of the 30S ribosomal subunit. Contacts proteins S5 and S12.

In terms of biological role, one of the primary rRNA binding proteins, it binds directly to 16S rRNA central domain where it helps coordinate assembly of the platform of the 30S subunit. In Lysinibacillus sphaericus (strain C3-41), this protein is Small ribosomal subunit protein uS8.